The following is a 463-amino-acid chain: ATP synthase subunit beta 1 (463 aa).

Residue 152–159 participates in ATP binding; that stretch reads GGAGVGKT.

Belongs to the ATPase alpha/beta chains family. In terms of assembly, F-type ATPases have 2 components, CF(1) - the catalytic core - and CF(0) - the membrane proton channel. CF(1) has five subunits: alpha(3), beta(3), gamma(1), delta(1), epsilon(1). CF(0) has three main subunits: a(1), b(2) and c(9-12). The alpha and beta chains form an alternating ring which encloses part of the gamma chain. CF(1) is attached to CF(0) by a central stalk formed by the gamma and epsilon chains, while a peripheral stalk is formed by the delta and b chains.

The protein resides in the cell inner membrane. It catalyses the reaction ATP + H2O + 4 H(+)(in) = ADP + phosphate + 5 H(+)(out). Produces ATP from ADP in the presence of a proton gradient across the membrane. The catalytic sites are hosted primarily by the beta subunits. This Shewanella frigidimarina (strain NCIMB 400) protein is ATP synthase subunit beta 1.